The chain runs to 104 residues: Large ribosomal subunit protein uL15z (104 aa).

The protein belongs to the universal ribosomal protein uL15 family.

This is Large ribosomal subunit protein uL15z (RPL27AA) from Arabidopsis thaliana (Mouse-ear cress).